Consider the following 817-residue polypeptide: V-type proton ATPase subunit a1 (817 aa).

The Cytoplasmic portion of the chain corresponds to 1-422 (MEEFLDKLPQ…PAVYSVVTYP (422 aa)). Residues 97–133 (DIALGDLERQLADHEHEVLEMNSNSEKLRQTYNELLE) adopt a coiled-coil conformation. A helical membrane pass occupies residues 423 to 443 (FLFAVMFGDWGHGLCLLLGAL). The Vacuolar portion of the chain corresponds to 444 to 468 (YLLARERKLSTQKLGSFMEMLFGGR). A helical membrane pass occupies residues 469–489 (YVILLMALFSIYCGLIYNEFF). Residues 490-547 (SVPFHIFGGSAYKCRDTTCSDAYTVGLIKYRDPYPFGVDPSWRGSRTELPYLNSLKMK) are Cytoplasmic-facing. Residues 548–568 (MSILLGIAQMNLGLILSFFNA) form a helical membrane-spanning segment. The Vacuolar portion of the chain corresponds to 569–580 (RFFGSSLDIRYQ). A helical membrane pass occupies residues 581-601 (FIPQMIFLNSLFGYLSLLIII). The Cytoplasmic segment spans residues 602–639 (KWCTGSQADLYHVMIYMFLSPTEELGENELFWGQRPLQ). A helical transmembrane segment spans residues 640–660 (IVLLLLAFIAVPWMLFPKPFA). Residues 661 to 758 (LRKIHMERFQ…VLLLAWGYEN (98 aa)) are Vacuolar-facing. The chain crosses the membrane as a helical span at residues 759–779 (ILIRLIGVAVFAFATAFILLM). Topologically, residues 780-817 (METLSAFLHALRLHWVEFMGKFFNGDGYKFKPFSFALI) are cytoplasmic.

It belongs to the V-ATPase 116 kDa subunit family. In terms of assembly, V-ATPase is a heteromultimeric enzyme composed of a peripheral catalytic V1 complex (components A to H) attached to an integral membrane V0 proton pore complex (components: a, c, c'', d and e).

The protein resides in the vacuole membrane. Its subcellular location is the golgi apparatus. It is found in the trans-Golgi network membrane. Its function is as follows. Essential component of the vacuolar proton pump (V-ATPase), a multimeric enzyme that catalyzes the translocation of protons across the membranes. Required for assembly and activity of the V-ATPase. Required during cell expansion. This Arabidopsis thaliana (Mouse-ear cress) protein is V-type proton ATPase subunit a1.